Consider the following 359-residue polypeptide: Phospho-N-acetylmuramoyl-pentapeptide-transferase (359 aa).

The next 10 membrane-spanning stretches (helical) occupy residues 3-23, 55-75, 84-104, 117-137, 156-176, 190-210, 231-251, 255-275, 283-303, and 330-350; these read QILIAVAIAVAVSILLTPVLI, VAIVAGIWASYFGTHLVGVVI, GLLVLGLATALGAVGFLDDLI, TAKTVGILVAAVLFGVLALQF, IATVTLAPAVFVLFCVVVVSA, LAAGAMAMVCAAYVLITFWQF, LAIIAAATAGACIGFLWWNAA, IFMGDTGSLALGGIIAGLSVT, VVLGALFVAEVTSVVVQILAF, and VIIRFWLLTAIACGLGVALFY.

The protein belongs to the glycosyltransferase 4 family. MraY subfamily. Mg(2+) is required as a cofactor.

The protein resides in the cell membrane. It carries out the reaction UDP-N-acetyl-alpha-D-muramoyl-L-alanyl-gamma-D-glutamyl-meso-2,6-diaminopimeloyl-D-alanyl-D-alanine + di-trans,octa-cis-undecaprenyl phosphate = di-trans,octa-cis-undecaprenyl diphospho-N-acetyl-alpha-D-muramoyl-L-alanyl-D-glutamyl-meso-2,6-diaminopimeloyl-D-alanyl-D-alanine + UMP. It functions in the pathway cell wall biogenesis; peptidoglycan biosynthesis. Catalyzes the initial step of the lipid cycle reactions in the biosynthesis of the cell wall peptidoglycan: transfers peptidoglycan precursor phospho-MurNAc-pentapeptide from UDP-MurNAc-pentapeptide onto the lipid carrier undecaprenyl phosphate, yielding undecaprenyl-pyrophosphoryl-MurNAc-pentapeptide, known as lipid I. The chain is Phospho-N-acetylmuramoyl-pentapeptide-transferase from Mycolicibacterium vanbaalenii (strain DSM 7251 / JCM 13017 / BCRC 16820 / KCTC 9966 / NRRL B-24157 / PYR-1) (Mycobacterium vanbaalenii).